The following is a 440-amino-acid chain: Tetratricopeptide repeat protein 5 (440 aa).

TPR repeat units follow at residues 7-61, 68-98, 103-130, 136-174, and 179-216; these read EEVK…EEVV, AQVL…AVKL, VEAW…SGAL, KVSL…AVQM, and GRSW…AEKV. Residues 13–24 carry the Nuclear export signal motif; that stretch reads LQKLQELVDQLY. Residue Ser203 is modified to Phosphoserine; by ATM. Ser221 carries the post-translational modification Phosphoserine; by CHEK2. The TPR 6 repeat unit spans residues 224-253; the sequence is PDLHLNRATLHKYEESYGEALEGFSRAAAL. The interval 285-287 is mediates interaction with 28S rRNA of ribosome-coding tubulin; the sequence is KTK.

In terms of assembly, interacts with JMY and p300/EP300; the interaction occurs in the nucleus and augments the association between JMY and p300/EP300 in response to DNA damage. Forms a complex with HSF1 and p300/EP300; these interactions augment chromatin-bound HSF1 and p300/EP300 histone acetyltransferase activity, resulting in enhanced heat-shock-responsive transcription. Interacts with PRMT5; the interaction is DNA damage-dependent and promotes PRMT5 interaction with p53/TP53 and subsequent methylation. Interacts with JMY; the interaction occurs in the cytoplasm and results in the inhibition of JYM's nucleation activity. Interacts with ribosome-coding tubulin (via 60S subunit 28S rRNA and protein uL24/RPL26) and the N-terminal of nascent tubulin polypeptide (via alpha-tubulin MREC motif and beta-tubulin MREI motif); these interactions result in tubulin mRNA-targeted degradation. Interacts with ATP5F1B; the interaction occurs in the mitochondria and results in ATP production decrease. Interacts with p53/TP53; the interaction occurs in the mitochondria and results in increased apoptosis. Phosphorylation by ATM kinase induces nuclear accumulation while interfering with nuclear export, and phosphorylation by CHEK2 kinase enhances nuclear stability.

It localises to the nucleus. Its subcellular location is the cytoplasm. The protein localises to the cytoplasmic vesicle. It is found in the mitochondrion matrix. Its function is as follows. Cofactor involved in the regulation of various cellular mechanisms such as actin regulation, autophagy, chromatin regulation and DNA repair. In non-stress conditions, interacts with cofactor JMY in the cytoplasm which prevents JMY's actin nucleation activity and ability to activate the Arp2/3 complex. Acts as a negative regulator of nutrient stress-induced autophagy by preventing JMY's interaction with MAP1LC3B, thereby preventing autophagosome formation. Involves in tubulin autoregulation by promoting its degradation in response to excess soluble tubulin. To do so, associates with the active ribosome near the ribosome exit tunnel and with nascent tubulin polypeptides early during their translation, triggering tubulin mRNA-targeted degradation. Following DNA damage, phosphorylated by DNA damage responsive protein kinases ATM and CHEK2, leading to its nuclear accumulation and stability. Nuclear TTC5/STRAP promotes the assembly of a stress-responsive p53/TP53 coactivator complex, which includes the coactivators JMY and p300, thereby increasing p53/TP53-dependent transcription and apoptosis. Also recruits arginine methyltransferase PRMT5 to p53/TP53 when DNA is damaged, allowing PRMT5 to methylate p53/TP53. In DNA stress conditions, also prevents p53/TP53 degradation by E3 ubiquitin ligase MDM2. Upon heat-shock stress, forms a chromatin-associated complex with heat-shock factor 1 HSF1 and p300/EP300 to stimulate heat-shock-responsive transcription, thereby increasing cell survival. Mitochondrial TTC5/STRAP interacts with ATP synthase subunit beta ATP5F1B which decreased ATP synthase activity and lowers mitochondrial ATP production, thereby regulating cellular respiration and mitochondrial-dependent apoptosis. Mitochondrial TTC5/STRAP also regulates p53/TP53-mediated apoptosis. The polypeptide is Tetratricopeptide repeat protein 5 (Homo sapiens (Human)).